Consider the following 341-residue polypeptide: MAKVYYNGDANEQYLQGKTVAIIGYGSQGHAHAQNLRDSGVRVIVGLRKGKSWEQAEQDGFEVYSVREAAKQADIVMVLLPDEKQPAVYKEEIEPELEPGNALVFAHGFNIHFSQIVPPNHVDVFLVAPKGPGHLVRRTYTEGAGVPALIAVYQDVTGHARETALAYAKAIGAARAGVLETTFKEETETDLFGEQAVLCGGLTALIKAGFETLVEAGYQPEVAYFECLHEMKLIVDLLYEGGLSWMRYSISDTAQWGDFITGPRIINDAVKAEMKKVLDDIQTGKFAKSWILENQANRPEFNAINRRENEHLIEIVGRELRSMMPFVKAKQVEAVVPGAKN.

One can recognise a KARI N-terminal Rossmann domain in the interval 2–181 (AKVYYNGDAN…GAARAGVLET (180 aa)). Residues 25–28 (YGSQ), Arg48, Ser52, and 82–85 (DEKQ) each bind NADP(+). Residue His107 is part of the active site. Residue Gly133 coordinates NADP(+). A KARI C-terminal knotted domain is found at 182–327 (TFKEETETDL…RELRSMMPFV (146 aa)). The Mg(2+) site is built by Asp190, Glu194, Glu226, and Glu230. Residue Ser251 participates in substrate binding.

Belongs to the ketol-acid reductoisomerase family. It depends on Mg(2+) as a cofactor.

It carries out the reaction (2R)-2,3-dihydroxy-3-methylbutanoate + NADP(+) = (2S)-2-acetolactate + NADPH + H(+). It catalyses the reaction (2R,3R)-2,3-dihydroxy-3-methylpentanoate + NADP(+) = (S)-2-ethyl-2-hydroxy-3-oxobutanoate + NADPH + H(+). The protein operates within amino-acid biosynthesis; L-isoleucine biosynthesis; L-isoleucine from 2-oxobutanoate: step 2/4. It functions in the pathway amino-acid biosynthesis; L-valine biosynthesis; L-valine from pyruvate: step 2/4. Its function is as follows. Involved in the biosynthesis of branched-chain amino acids (BCAA). Catalyzes an alkyl-migration followed by a ketol-acid reduction of (S)-2-acetolactate (S2AL) to yield (R)-2,3-dihydroxy-isovalerate. In the isomerase reaction, S2AL is rearranged via a Mg-dependent methyl migration to produce 3-hydroxy-3-methyl-2-ketobutyrate (HMKB). In the reductase reaction, this 2-ketoacid undergoes a metal-dependent reduction by NADPH to yield (R)-2,3-dihydroxy-isovalerate. This Geobacillus kaustophilus (strain HTA426) protein is Ketol-acid reductoisomerase (NADP(+)).